The following is a 246-amino-acid chain: Pyridoxine 5'-phosphate synthase (246 aa).

3-amino-2-oxopropyl phosphate-binding residues include Asn8 and Arg19. His44 serves as the catalytic Proton acceptor. 2 residues coordinate 1-deoxy-D-xylulose 5-phosphate: Arg46 and His51. Catalysis depends on Glu76, which acts as the Proton acceptor. Thr106 contributes to the 1-deoxy-D-xylulose 5-phosphate binding site. His198 acts as the Proton donor in catalysis. 3-amino-2-oxopropyl phosphate is bound by residues Asp199 and 221–222 (GH).

This sequence belongs to the PNP synthase family. Homooctamer; tetramer of dimers.

It is found in the cytoplasm. It catalyses the reaction 3-amino-2-oxopropyl phosphate + 1-deoxy-D-xylulose 5-phosphate = pyridoxine 5'-phosphate + phosphate + 2 H2O + H(+). Its pathway is cofactor biosynthesis; pyridoxine 5'-phosphate biosynthesis; pyridoxine 5'-phosphate from D-erythrose 4-phosphate: step 5/5. Functionally, catalyzes the complicated ring closure reaction between the two acyclic compounds 1-deoxy-D-xylulose-5-phosphate (DXP) and 3-amino-2-oxopropyl phosphate (1-amino-acetone-3-phosphate or AAP) to form pyridoxine 5'-phosphate (PNP) and inorganic phosphate. This Brucella abortus (strain S19) protein is Pyridoxine 5'-phosphate synthase.